We begin with the raw amino-acid sequence, 67 residues long: DNA-directed RNA polymerase subunit omega (67 aa).

It belongs to the RNA polymerase subunit omega family. The RNAP catalytic core consists of 2 alpha, 1 beta, 1 beta' and 1 omega subunit. When a sigma factor is associated with the core the holoenzyme is formed, which can initiate transcription.

The enzyme catalyses RNA(n) + a ribonucleoside 5'-triphosphate = RNA(n+1) + diphosphate. Promotes RNA polymerase assembly. Latches the N- and C-terminal regions of the beta' subunit thereby facilitating its interaction with the beta and alpha subunits. The polypeptide is DNA-directed RNA polymerase subunit omega (Acidovorax ebreus (strain TPSY) (Diaphorobacter sp. (strain TPSY))).